Here is a 207-residue protein sequence, read N- to C-terminus: Holliday junction branch migration complex subunit RuvA (207 aa).

The domain I stretch occupies residues 1 to 64 (MIGRLRGNLL…EDAQLLYGFN (64 aa)). The tract at residues 65–143 (TKNERALFRE…GWGAGDLFTP (79 aa)) is domain II. Residues 144–158 (ATDAAPMDDGSEFIT) are flexible linker. Positions 159–207 (SPQSAVDEAVSALIALGYKPQQASKTVSQVAKPDMTSEVLIRESLKSMI) are domain III.

This sequence belongs to the RuvA family. Homotetramer. Forms an RuvA(8)-RuvB(12)-Holliday junction (HJ) complex. HJ DNA is sandwiched between 2 RuvA tetramers; dsDNA enters through RuvA and exits via RuvB. An RuvB hexamer assembles on each DNA strand where it exits the tetramer. Each RuvB hexamer is contacted by two RuvA subunits (via domain III) on 2 adjacent RuvB subunits; this complex drives branch migration. In the full resolvosome a probable DNA-RuvA(4)-RuvB(12)-RuvC(2) complex forms which resolves the HJ.

It localises to the cytoplasm. Functionally, the RuvA-RuvB-RuvC complex processes Holliday junction (HJ) DNA during genetic recombination and DNA repair, while the RuvA-RuvB complex plays an important role in the rescue of blocked DNA replication forks via replication fork reversal (RFR). RuvA specifically binds to HJ cruciform DNA, conferring on it an open structure. The RuvB hexamer acts as an ATP-dependent pump, pulling dsDNA into and through the RuvAB complex. HJ branch migration allows RuvC to scan DNA until it finds its consensus sequence, where it cleaves and resolves the cruciform DNA. The chain is Holliday junction branch migration complex subunit RuvA from Aliivibrio fischeri (strain MJ11) (Vibrio fischeri).